The primary structure comprises 306 residues: Glutathione transport system permease protein GsiC (306 aa).

Topologically, residues 1-8 are cytoplasmic; the sequence is MLNYVIKR. The chain crosses the membrane as a helical span at residues 9 to 29; that stretch reads LLGLIPTLFIVSVLVFLFVHM. The Periplasmic segment spans residues 30–102; it reads LPGDPARLIA…SRFMPTLWLT (73 aa). Positions 95–292 constitute an ABC transmembrane type-1 domain; that stretch reads FMPTLWLTIT…LEFILINLVV (198 aa). A helical membrane pass occupies residues 103–123; that stretch reads ITSMVWAVIFGMAAGIIAAVW. Topologically, residues 124–134 are cytoplasmic; sequence RNRWPDRLSMT. Residues 135–155 traverse the membrane as a helical segment; that stretch reads IAVSGISFPAFALGMLLIQVF. The Periplasmic segment spans residues 156–168; it reads SVELGWLPTVGAD. A helical transmembrane segment spans residues 169 to 189; the sequence is SWQHYILPSLTLGAAVAAVMA. The Cytoplasmic segment spans residues 190 to 228; the sequence is RFTRASFVDVLSEDYMRTARAKGVSETWVVLKHGLRNAM. Residues 229-249 form a helical membrane-spanning segment; the sequence is IPVVTMMGLQFGFLLGGSIVV. Residues 250–277 are Periplasmic-facing; sequence EKVFNWPGLGRLLVDSVEMRDYPVIQAE. A helical transmembrane segment spans residues 278-298; that stretch reads ILLFSLEFILINLVVDVLYAA. Residues 299–306 lie on the Cytoplasmic side of the membrane; sequence INPAIRYK.

This sequence belongs to the binding-protein-dependent transport system permease family. In terms of assembly, the complex is composed of two ATP-binding proteins (GsiA), two transmembrane proteins (GsiC and GsiD) and a solute-binding protein (GsiB).

The protein localises to the cell inner membrane. Part of the ABC transporter complex GsiABCD involved in glutathione import. Probably responsible for the translocation of the substrate across the membrane. The chain is Glutathione transport system permease protein GsiC from Escherichia coli O1:K1 / APEC.